A 235-amino-acid chain; its full sequence is Large ribosomal subunit protein uL1 (235 aa).

The protein belongs to the universal ribosomal protein uL1 family. In terms of assembly, part of the 50S ribosomal subunit.

Its function is as follows. Binds directly to 23S rRNA. The L1 stalk is quite mobile in the ribosome, and is involved in E site tRNA release. In terms of biological role, protein L1 is also a translational repressor protein, it controls the translation of the L11 operon by binding to its mRNA. The chain is Large ribosomal subunit protein uL1 from Prochlorococcus marinus (strain MIT 9313).